A 208-amino-acid chain; its full sequence is Claudin-like protein ZF-A89 (208 aa).

The next 4 membrane-spanning stretches (helical) occupy residues 8 to 28 (LLATVLAIIGWLGEIVICALP), 82 to 102 (ALVVISIIVTFMGVFLTIAGG), 117 to 137 (VVVAAGVFFLVGGILCLIPVC), and 160 to 180 (LGASLFIGWCASGLLLLGGAL).

Belongs to the claudin family.

It localises to the cell membrane. Its subcellular location is the cell junction. The protein resides in the tight junction. Functionally, component of tight junction (TJ) strands. This is Claudin-like protein ZF-A89 (cldnd) from Danio rerio (Zebrafish).